The chain runs to 399 residues: S-adenosylmethionine synthase (399 aa).

Residue His17 coordinates ATP. Position 19 (Asp19) interacts with Mg(2+). Glu45 is a K(+) binding site. L-methionine contacts are provided by Glu58 and Gln101. Residues 101–111 (QSPDIAQGVDE) form a flexible loop region. ATP is bound by residues 177 to 179 (DAK), 244 to 245 (RF), Asp253, 259 to 260 (RK), Ala276, and Lys280. Residue Asp253 coordinates L-methionine. Lys284 serves as a coordination point for L-methionine.

This sequence belongs to the AdoMet synthase family. In terms of assembly, homotetramer; dimer of dimers. It depends on Mg(2+) as a cofactor. K(+) is required as a cofactor.

It localises to the cytoplasm. It catalyses the reaction L-methionine + ATP + H2O = S-adenosyl-L-methionine + phosphate + diphosphate. It functions in the pathway amino-acid biosynthesis; S-adenosyl-L-methionine biosynthesis; S-adenosyl-L-methionine from L-methionine: step 1/1. Its function is as follows. Catalyzes the formation of S-adenosylmethionine (AdoMet) from methionine and ATP. The overall synthetic reaction is composed of two sequential steps, AdoMet formation and the subsequent tripolyphosphate hydrolysis which occurs prior to release of AdoMet from the enzyme. The chain is S-adenosylmethionine synthase from Listeria monocytogenes serovar 1/2a (strain ATCC BAA-679 / EGD-e).